A 330-amino-acid chain; its full sequence is Class III chitinase ARB_03514 (330 aa).

The signal sequence occupies residues 1-22; it reads MSSVKNILSFVALFAGVKTAYA. Positions 23-314 constitute a GH18 domain; the sequence is GLNSPGHNNV…SAVKGALSAG (292 aa). N-linked (GlcNAc...) asparagine glycans are attached at residues Asn61 and Asn135. Glu155 acts as the Proton donor in catalysis. 2 N-linked (GlcNAc...) asparagine glycosylation sites follow: Asn278 and Asn302.

The protein belongs to the glycosyl hydrolase 18 family. Chitinase class III subfamily. In terms of assembly, monomer.

The protein localises to the secreted. The catalysed reaction is Random endo-hydrolysis of N-acetyl-beta-D-glucosaminide (1-&gt;4)-beta-linkages in chitin and chitodextrins.. Secreted chitinase involved in the degradation of chitin, a component of the cell walls of fungi and exoskeletal elements of some animals (including worms and arthropods). Plays a morphogenetic role during apical growth, cell division and differentiation (cell wall morphogenesis). In Arthroderma benhamiae (strain ATCC MYA-4681 / CBS 112371) (Trichophyton mentagrophytes), this protein is Class III chitinase ARB_03514.